Consider the following 220-residue polypeptide: Ribose-5-phosphate isomerase A (220 aa).

Residues 25–28 (TGST), 80–83 (DGAD), and 93–96 (KGGG) each bind substrate. The Proton acceptor role is filled by E102. K120 serves as a coordination point for substrate.

The protein belongs to the ribose 5-phosphate isomerase family. Homodimer.

The enzyme catalyses aldehydo-D-ribose 5-phosphate = D-ribulose 5-phosphate. The protein operates within carbohydrate degradation; pentose phosphate pathway; D-ribose 5-phosphate from D-ribulose 5-phosphate (non-oxidative stage): step 1/1. Its function is as follows. Catalyzes the reversible conversion of ribose-5-phosphate to ribulose 5-phosphate. This chain is Ribose-5-phosphate isomerase A, found in Bacillus anthracis.